The primary structure comprises 432 residues: Peptidase B (432 aa).

Mn(2+) contacts are provided by Lys196 and Asp201. Residue Lys208 is part of the active site. 3 residues coordinate Mn(2+): Asp219, Asp278, and Glu280. The active site involves Arg282.

It belongs to the peptidase M17 family. Homohexamer. Mn(2+) serves as cofactor.

The protein resides in the cytoplasm. The catalysed reaction is Release of an N-terminal amino acid, Xaa, from a peptide or arylamide. Xaa is preferably Glu or Asp but may be other amino acids, including Leu, Met, His, Cys and Gln.. Its function is as follows. Probably plays an important role in intracellular peptide degradation. The sequence is that of Peptidase B from Vibrio parahaemolyticus serotype O3:K6 (strain RIMD 2210633).